Reading from the N-terminus, the 403-residue chain is Acetate kinase (403 aa).

N8 lines the Mg(2+) pocket. An ATP-binding site is contributed by K15. A substrate-binding site is contributed by R90. D147 functions as the Proton donor/acceptor in the catalytic mechanism. ATP-binding positions include 207 to 211 (HLGSG), 282 to 284 (DLR), and 330 to 334 (GVGEN). Mg(2+) is bound at residue E384.

It belongs to the acetokinase family. In terms of assembly, homodimer. It depends on Mg(2+) as a cofactor. The cofactor is Mn(2+).

It localises to the cytoplasm. The catalysed reaction is acetate + ATP = acetyl phosphate + ADP. Its pathway is metabolic intermediate biosynthesis; acetyl-CoA biosynthesis; acetyl-CoA from acetate: step 1/2. Functionally, catalyzes the formation of acetyl phosphate from acetate and ATP. Can also catalyze the reverse reaction. This Exiguobacterium sp. (strain ATCC BAA-1283 / AT1b) protein is Acetate kinase.